The sequence spans 264 residues: Small ribosomal subunit protein eS1 (264 aa).

The interval 233 to 264 (GEGGGAGKPAGDETGAKVERADGYEPPVQESV) is disordered. Basic and acidic residues predominate over residues 242-255 (AGDETGAKVERADG).

Belongs to the eukaryotic ribosomal protein eS1 family. Component of the small ribosomal subunit. Mature ribosomes consist of a small (40S) and a large (60S) subunit. The 40S subunit contains about 33 different proteins and 1 molecule of RNA (18S). The 60S subunit contains about 49 different proteins and 3 molecules of RNA (28S, 5.8S and 5S). Part of the small subunit (SSU) processome, composed of more than 70 proteins and the RNA chaperone small nucleolar RNA (snoRNA) U3.

Its subcellular location is the cytoplasm. The protein localises to the nucleus. It is found in the nucleolus. Component of the small ribosomal subunit. The ribosome is a large ribonucleoprotein complex responsible for the synthesis of proteins in the cell. Part of the small subunit (SSU) processome, first precursor of the small eukaryotic ribosomal subunit. During the assembly of the SSU processome in the nucleolus, many ribosome biogenesis factors, an RNA chaperone and ribosomal proteins associate with the nascent pre-rRNA and work in concert to generate RNA folding, modifications, rearrangements and cleavage as well as targeted degradation of pre-ribosomal RNA by the RNA exosome. May play a role during erythropoiesis. The sequence is that of Small ribosomal subunit protein eS1 (rps3a) from Xenopus tropicalis (Western clawed frog).